The sequence spans 138 residues: ATP synthase epsilon chain (138 aa).

This sequence belongs to the ATPase epsilon chain family. F-type ATPases have 2 components, CF(1) - the catalytic core - and CF(0) - the membrane proton channel. CF(1) has five subunits: alpha(3), beta(3), gamma(1), delta(1), epsilon(1). CF(0) has three main subunits: a, b and c.

It localises to the cell membrane. Produces ATP from ADP in the presence of a proton gradient across the membrane. The sequence is that of ATP synthase epsilon chain from Streptococcus equinus (Streptococcus bovis).